Here is a 336-residue protein sequence, read N- to C-terminus: Aspartate--ammonia ligase (336 aa).

This sequence belongs to the class-II aminoacyl-tRNA synthetase family. AsnA subfamily.

Its subcellular location is the cytoplasm. It carries out the reaction L-aspartate + NH4(+) + ATP = L-asparagine + AMP + diphosphate + H(+). The protein operates within amino-acid biosynthesis; L-asparagine biosynthesis; L-asparagine from L-aspartate (ammonia route): step 1/1. This is Aspartate--ammonia ligase from Ligilactobacillus salivarius (strain UCC118) (Lactobacillus salivarius).